The chain runs to 285 residues: ATP synthase gamma chain (285 aa).

Belongs to the ATPase gamma chain family. In terms of assembly, F-type ATPases have 2 components, CF(1) - the catalytic core - and CF(0) - the membrane proton channel. CF(1) has five subunits: alpha(3), beta(3), gamma(1), delta(1), epsilon(1). CF(0) has three main subunits: a, b and c.

The protein resides in the cell membrane. Functionally, produces ATP from ADP in the presence of a proton gradient across the membrane. The gamma chain is believed to be important in regulating ATPase activity and the flow of protons through the CF(0) complex. The protein is ATP synthase gamma chain of Dehalococcoides mccartyi (strain CBDB1).